A 292-amino-acid polypeptide reads, in one-letter code: Malonyl-[acyl-carrier protein] O-methyltransferase (292 aa).

The protein belongs to the methyltransferase superfamily.

It carries out the reaction malonyl-[ACP] + S-adenosyl-L-methionine = malonyl-[ACP] methyl ester + S-adenosyl-L-homocysteine. Its pathway is cofactor biosynthesis; biotin biosynthesis. In terms of biological role, converts the free carboxyl group of a malonyl-thioester to its methyl ester by transfer of a methyl group from S-adenosyl-L-methionine (SAM). It allows to synthesize pimeloyl-ACP via the fatty acid synthetic pathway. In Alcanivorax borkumensis (strain ATCC 700651 / DSM 11573 / NCIMB 13689 / SK2), this protein is Malonyl-[acyl-carrier protein] O-methyltransferase.